Here is a 138-residue protein sequence, read N- to C-terminus: Sec-independent protein translocase protein TatB (138 aa).

A helical membrane pass occupies residues 1 to 21 (MFDIGATELLVIAIVAILVIG). Residues 74 to 138 (MAKHPADQMQ…EPRLPLEGRD (65 aa)) form a disordered region. Over residues 83 to 97 (QPLDAPDPALSAAEA) the composition is skewed to low complexity. A compositionally biased stretch (basic and acidic residues) spans 98–138 (RAAHTEAAKPARAAEETQADRASADEHPAASEPRLPLEGRD).

It belongs to the TatB family. The Tat system comprises two distinct complexes: a TatABC complex, containing multiple copies of TatA, TatB and TatC subunits, and a separate TatA complex, containing only TatA subunits. Substrates initially bind to the TatABC complex, which probably triggers association of the separate TatA complex to form the active translocon.

The protein resides in the cell inner membrane. Part of the twin-arginine translocation (Tat) system that transports large folded proteins containing a characteristic twin-arginine motif in their signal peptide across membranes. Together with TatC, TatB is part of a receptor directly interacting with Tat signal peptides. TatB may form an oligomeric binding site that transiently accommodates folded Tat precursor proteins before their translocation. The polypeptide is Sec-independent protein translocase protein TatB (Erythrobacter litoralis (strain HTCC2594)).